The chain runs to 292 residues: 4-hydroxy-tetrahydrodipicolinate synthase (292 aa).

Thr-44 is a binding site for pyruvate. Tyr-132 (proton donor/acceptor) is an active-site residue. Lys-161 functions as the Schiff-base intermediate with substrate in the catalytic mechanism. Ile-203 contributes to the pyruvate binding site.

The protein belongs to the DapA family. As to quaternary structure, homotetramer.

The protein localises to the cytoplasm. It carries out the reaction L-aspartate 4-semialdehyde + pyruvate = (2S,4S)-4-hydroxy-2,3,4,5-tetrahydrodipicolinate + H2O + H(+). Its pathway is amino-acid biosynthesis; L-lysine biosynthesis via DAP pathway; (S)-tetrahydrodipicolinate from L-aspartate: step 3/4. Is feedback inhibited by lysine. Is competitively inhibited by 2-oxobutyrate with respect to pyruvate. Its function is as follows. Catalyzes the condensation of (S)-aspartate-beta-semialdehyde [(S)-ASA] and pyruvate to 4-hydroxy-tetrahydrodipicolinate (HTPA). The protein is 4-hydroxy-tetrahydrodipicolinate synthase of Rhizobium meliloti (Ensifer meliloti).